We begin with the raw amino-acid sequence, 208 residues long: Small ribosomal subunit protein uS4A (208 aa).

An S4 RNA-binding domain is found at 98 to 161 (LRLDNVVFRM…RKVLRISEAL (64 aa)).

The protein belongs to the universal ribosomal protein uS4 family. In terms of assembly, part of the 30S ribosomal subunit. Contacts protein S5. The interaction surface between S4 and S5 is involved in control of translational fidelity.

Functionally, one of the primary rRNA binding proteins, it binds directly to 16S rRNA where it nucleates assembly of the body of the 30S subunit. With S5 and S12 plays an important role in translational accuracy. This is Small ribosomal subunit protein uS4A from Myxococcus xanthus (strain DK1622).